A 151-amino-acid chain; its full sequence is UPF0178 protein YaiI (151 aa).

It belongs to the UPF0178 family.

In Salmonella arizonae (strain ATCC BAA-731 / CDC346-86 / RSK2980), this protein is UPF0178 protein YaiI.